We begin with the raw amino-acid sequence, 612 residues long: Threonine--tRNA ligase (612 aa).

Residues 218-509 form a catalytic region; sequence NHRKLGVELG…LSEHFGGNFP (292 aa). Residues Cys310, His361, and His486 each coordinate Zn(2+).

Belongs to the class-II aminoacyl-tRNA synthetase family. Homodimer. Zn(2+) serves as cofactor.

The protein resides in the cytoplasm. The enzyme catalyses tRNA(Thr) + L-threonine + ATP = L-threonyl-tRNA(Thr) + AMP + diphosphate + H(+). Its function is as follows. Catalyzes the attachment of threonine to tRNA(Thr) in a two-step reaction: L-threonine is first activated by ATP to form Thr-AMP and then transferred to the acceptor end of tRNA(Thr). Also edits incorrectly charged L-seryl-tRNA(Thr). The chain is Threonine--tRNA ligase from Helicobacter pylori (strain Shi470).